Consider the following 151-residue polypeptide: Methylglyoxal synthase (151 aa).

Residues Arg6–Val151 enclose the MGS-like domain. Residues His19, Lys23, Thr45–Thr48, and Ser65–Gly66 each bind substrate. Catalysis depends on Asp71, which acts as the Proton donor/acceptor. Residue His98 coordinates substrate.

The protein belongs to the methylglyoxal synthase family.

It catalyses the reaction dihydroxyacetone phosphate = methylglyoxal + phosphate. Its function is as follows. Catalyzes the formation of methylglyoxal from dihydroxyacetone phosphate. The polypeptide is Methylglyoxal synthase (Aliivibrio fischeri (strain MJ11) (Vibrio fischeri)).